Reading from the N-terminus, the 29-residue chain is Cytochrome b6-f complex subunit 8 (29 aa).

Residues 3–23 traverse the membrane as a helical segment; it reads ILSISWAFLMVVFTFSLSLVV.

This sequence belongs to the PetN family. As to quaternary structure, the 4 large subunits of the cytochrome b6-f complex are cytochrome b6, subunit IV (17 kDa polypeptide, PetD), cytochrome f and the Rieske protein, while the 4 small subunits are PetG, PetL, PetM and PetN. The complex functions as a dimer.

The protein localises to the plastid. It localises to the chloroplast thylakoid membrane. Functionally, component of the cytochrome b6-f complex, which mediates electron transfer between photosystem II (PSII) and photosystem I (PSI), cyclic electron flow around PSI, and state transitions. The chain is Cytochrome b6-f complex subunit 8 from Chara vulgaris (Common stonewort).